The sequence spans 124 residues: Bactoprenol-linked glucose translocase (124 aa).

Helical transmembrane passes span 12 to 32, 45 to 65, 75 to 95, and 96 to 116; these read FFSYFLIGIVNTALHWGVFYA, NIVGFICAATFSFFANARCSF, FIFIFFMGAMSYLFGVLFDLL, and ALSPIFTLFTFSLFSLVLGYC.

Belongs to the GtrA family.

It localises to the cell membrane. It functions in the pathway bacterial outer membrane biogenesis; lipopolysaccharide biosynthesis. Functionally, involved in O antigen modification. Involved in the translocation of bactoprenol-linked glucose across the cytoplasmic membrane. This is Bactoprenol-linked glucose translocase (rfbI) from Shigella flexneri.